Consider the following 441-residue polypeptide: Vacuolar cation/proton exchanger 5 (441 aa).

Residue Gly2 is the site of N-myristoyl glycine attachment. Residues Gly2 to Lys69 are Cytoplasmic-facing. Residues Cys3 and Cys4 are each lipidated (S-palmitoyl cysteine). The helical transmembrane segment at Ile70–Leu90 threads the bilayer. Residues His91 to Lys97 are Extracellular-facing. The helical transmembrane segment at Gly98 to Ala118 threads the bilayer. Over Thr119 to Thr129 the chain is Cytoplasmic. Residues Val130–Ala150 traverse the membrane as a helical segment. Residues Gly139–Val174 are cation selection. Residues Leu151–Gly165 are Extracellular-facing. Residues Ser166–Phe186 traverse the membrane as a helical segment. Over Ser187–Asn197 the chain is Cytoplasmic. A helical membrane pass occupies residues Ala198–Leu218. The Extracellular segment spans residues His219 to Glu231. Residues Leu232–Phe252 form a helical membrane-spanning segment. At Gln253–Trp286 the chain is on the cytoplasmic side. Residues Glu287–Val307 traverse the membrane as a helical segment. The Extracellular segment spans residues Asp308 to Glu311. Residues Gly312–Val332 traverse the membrane as a helical segment. At Gly333–Leu354 the chain is on the cytoplasmic side. The tract at residues Gly333 to Ala368 is cation selection. The chain crosses the membrane as a helical span at residues Gly355–Ile375. The Extracellular segment spans residues Gly376–Asp384. A helical membrane pass occupies residues Leu385 to Phe405. At Leu406–Asn412 the chain is on the cytoplasmic side. A helical transmembrane segment spans residues Tyr413–His433. Over Glu434–Ile441 the chain is Extracellular.

Belongs to the Ca(2+):cation antiporter (CaCA) (TC 2.A.19) family. Cation/proton exchanger (CAX) subfamily.

It is found in the vacuole membrane. Vacuolar cation/proton exchanger (CAX). Translocates Ca(2+) and other metal ions into vacuoles using the proton gradient formed by H(+)-ATPase and H(+)-pyrophosphatase. In Arabidopsis thaliana (Mouse-ear cress), this protein is Vacuolar cation/proton exchanger 5 (CAX5).